The primary structure comprises 383 residues: S-adenosylmethionine synthase (383 aa).

His15 serves as a coordination point for ATP. Asp17 serves as a coordination point for Mg(2+). Glu43 serves as a coordination point for K(+). 2 residues coordinate L-methionine: Glu56 and Gln99. The interval 99-109 (QSSDINQGVDR) is flexible loop. Residues 164-166 (DAK), 230-231 (RF), Asp239, 245-246 (RK), Ala262, and Lys266 contribute to the ATP site. Asp239 lines the L-methionine pocket. Position 270 (Lys270) interacts with L-methionine.

This sequence belongs to the AdoMet synthase family. As to quaternary structure, homotetramer; dimer of dimers. The cofactor is Mg(2+). K(+) serves as cofactor.

The protein localises to the cytoplasm. The enzyme catalyses L-methionine + ATP + H2O = S-adenosyl-L-methionine + phosphate + diphosphate. Its pathway is amino-acid biosynthesis; S-adenosyl-L-methionine biosynthesis; S-adenosyl-L-methionine from L-methionine: step 1/1. Functionally, catalyzes the formation of S-adenosylmethionine (AdoMet) from methionine and ATP. The overall synthetic reaction is composed of two sequential steps, AdoMet formation and the subsequent tripolyphosphate hydrolysis which occurs prior to release of AdoMet from the enzyme. The chain is S-adenosylmethionine synthase from Mannheimia succiniciproducens (strain KCTC 0769BP / MBEL55E).